The primary structure comprises 2028 residues: Phosphatidylinositol 4-kinase alpha 1 (2028 aa).

The disordered stretch occupies residues 184–241 (PASPKEQRQQNSANSETDTSSSQGSPISTNRYPSGKTEMASPGDEVASHGSNLSSKSS). Residues 192–215 (QQNSANSETDTSSSQGSPISTNRY) are compositionally biased toward polar residues. The segment covering 231-241 (SHGSNLSSKSS) has biased composition (low complexity). The PIK helical domain occupies 1483–1659 (TEYAKTAFSV…NAAFQEILPQ (177 aa)). The pleckstrin homology (PH) domain conferring phosphoinositide binding specificity stretch occupies residues 1660-1773 (VRQHIIDGFS…VKPQACIFKV (114 aa)). Positions 1734–2012 (VDSGIPLQSA…VCTDAYNKWT (279 aa)) constitute a PI3K/PI4K catalytic domain. The segment at 1740–1746 (LQSAAKV) is G-loop. A catalytic loop region spans residues 1876–1884 (QPKDRHNGN). The segment at 1895 to 1920 (HIDFGFILETSPGGNMRFESAHFKLS) is activation loop.

The protein belongs to the PI3/PI4-kinase family. Type III PI4K subfamily. As to quaternary structure, interacts in vitro with actin filaments via its PH domain. In terms of tissue distribution, present in leaves and inflorescences.

It localises to the membrane. Its subcellular location is the cytoplasm. The protein localises to the perinuclear region. It carries out the reaction a 1,2-diacyl-sn-glycero-3-phospho-(1D-myo-inositol) + ATP = a 1,2-diacyl-sn-glycero-3-phospho-(1D-myo-inositol 4-phosphate) + ADP + H(+). With respect to regulation, repressed by PtdIns4P, adenosine and wortmannin, but stimulated by other negatively charged lipids such as PtdIns3P, PtdOH, and phosphatidyl-serine (PtdSer). Its function is as follows. Acts on phosphatidylinositol (PtdIns) in the first committed step in the production of the second messenger inositol-1,4,5,-trisphosphate. Can bind to phosphatidylinositol 4-monophosphate (PI-4-P or PtdIns4P), phosphatidylinositol 4,5-bisphosphate (PI-4,5-P2 or PtdIns4,5P2), and phosphatidic acid (PtdOH), but not to 3-phosphoinositides. May function upstream of the cold response phosphoinositide-dependent phospholipase C (PI-PLC) pathway. This is Phosphatidylinositol 4-kinase alpha 1 from Arabidopsis thaliana (Mouse-ear cress).